We begin with the raw amino-acid sequence, 796 residues long: Exocyst complex component 3 (796 aa).

Residues 87–174 (PQLKEKLREL…GTNTEKEQML (88 aa)) adopt a coiled-coil conformation.

It belongs to the SEC6 family. As to quaternary structure, the exocyst complex is composed of sec-3/exoc1, sec-5/exoc2, sec-6/exoc3, sec-8/exoc4, sec-10/exoc5, sec-15/exoc6, exo-70/exoc7 and exo-84/exoc8.

Component of the exocyst complex involved in the docking of exocytic vesicles with fusion sites on the plasma membrane. The polypeptide is Exocyst complex component 3 (sec-6) (Caenorhabditis elegans).